The following is a 397-amino-acid chain: Succinate--CoA ligase [ADP-forming] subunit beta (397 aa).

Residues 9-254 (KALLKGYGAP…ETEEDAKEIE (246 aa)) enclose the ATP-grasp domain. Residues Lys-46, 53–55 (GRG), Glu-109, Ala-112, and Glu-117 each bind ATP. Asn-209 and Asp-223 together coordinate Mg(2+). Residues Asn-274 and 331-333 (GIM) each bind substrate.

It belongs to the succinate/malate CoA ligase beta subunit family. As to quaternary structure, heterotetramer of two alpha and two beta subunits. Mg(2+) serves as cofactor.

The enzyme catalyses succinate + ATP + CoA = succinyl-CoA + ADP + phosphate. It catalyses the reaction GTP + succinate + CoA = succinyl-CoA + GDP + phosphate. It functions in the pathway carbohydrate metabolism; tricarboxylic acid cycle; succinate from succinyl-CoA (ligase route): step 1/1. Succinyl-CoA synthetase functions in the citric acid cycle (TCA), coupling the hydrolysis of succinyl-CoA to the synthesis of either ATP or GTP and thus represents the only step of substrate-level phosphorylation in the TCA. The beta subunit provides nucleotide specificity of the enzyme and binds the substrate succinate, while the binding sites for coenzyme A and phosphate are found in the alpha subunit. In Agrobacterium fabrum (strain C58 / ATCC 33970) (Agrobacterium tumefaciens (strain C58)), this protein is Succinate--CoA ligase [ADP-forming] subunit beta.